The sequence spans 358 residues: MSARIRPDLSSIPAYTPGRSNPGAVKLASNETTLPPLPAAAKAIAEAAELAHRYPDNQSGELRAALAEFLGVRVENVAIGCGSVALCQELVQITCSSPRDEVLFAWRSFEAYPIITQVGNATAVQVPLSPDYAHDLDALAAAVTEHTRLIFVCNPNNPTGTAHGRAALERFLDAVPAHVLVVLDEAYYEYMRLTPQDRPDGVEVGRNRPNVVVLRTFSKAYGLAGLRVGYAVGDPEVITALMKVHIPFSVNRVAQAAAIASLEARHELLERTEAVIVERERLREALLAAGYDVPPSETNFVWLPLGAHSAEFGEASAAAGVLVRPYGTDGVRVTVGDPHENEMFLRFAADPAVVARFR.

Lys219 is modified (N6-(pyridoxal phosphate)lysine).

It belongs to the class-II pyridoxal-phosphate-dependent aminotransferase family. As to quaternary structure, homodimer. It depends on pyridoxal 5'-phosphate as a cofactor.

It carries out the reaction an aromatic L-alpha-amino acid + 2-oxoglutarate = an aromatic oxo-acid + L-glutamate. In terms of biological role, aminotransferase that catalyzes the conversion of aromatic amino acids and 2-oxoglutarate into corresponding aromatic oxo acids and L-glutamate. The sequence is that of Aromatic amino acid aminotransferase from Nocardia farcinica (strain IFM 10152).